A 69-amino-acid chain; its full sequence is Putative transmembrane protein ORF34 (69 aa).

Transmembrane regions (helical) follow at residues 7–27 (LLSV…MMQF) and 42–62 (VSLM…IVYF).

The protein resides in the host membrane. The chain is Putative transmembrane protein ORF34 from Haloarcula hispanica (His1V).